The sequence spans 126 residues: Large ribosomal subunit protein bL17 (126 aa).

It belongs to the bacterial ribosomal protein bL17 family. As to quaternary structure, part of the 50S ribosomal subunit. Contacts protein L32.

The polypeptide is Large ribosomal subunit protein bL17 (Xylella fastidiosa (strain Temecula1 / ATCC 700964)).